Here is a 773-residue protein sequence, read N- to C-terminus: Probable C-mannosyltransferase DPY19L2 (773 aa).

Residues 1–45 form a disordered region; sequence MVGPTRSKLREGSSDRPQSSCTGQARRRWSAATMEPQQERSAPQE. At 1–122 the chain is on the nuclear side; that stretch reads MVGPTRSKLR…ALQMHRFSHR (122 aa). The helical transmembrane segment at 123–143 threads the bilayer; it reads TLFGLAIFVGILHWLHLITLF. Residues 144–209 are Perinuclear space-facing; it reads ENDHHFSHLS…INTVKRFHLY (66 aa). The chain crosses the membrane as a helical span at residues 210–230; it reads PEVVIAYWYRTIIGIMNLFGI. Residues 231-256 lie on the Nuclear side of the membrane; the sequence is ETKTCWNVTRMEPLNEVQSCEGLGDP. The chain crosses the membrane as a helical span at residues 257-277; that stretch reads ACFYIGVIFILNGLMMGLFFI. Residues 278-311 lie on the Perinuclear space side of the membrane; that stretch reads YSTYLSGSQLGGLITVACYFFNHGEATRVMWTPP. The chain crosses the membrane as a helical span at residues 312 to 332; the sequence is LRESFSYPFLVLQMYILTIIL. The Nuclear segment spans residues 333–358; sequence RTSTVHKKHYMALCFSNVAFMLPWQF. The chain crosses the membrane as a helical span at residues 359 to 379; it reads AQFILFTQIASLFPMYVVGYI. Topologically, residues 380 to 386 are perinuclear space; the sequence is EPSKFQK. The chain crosses the membrane as a helical span at residues 387-407; the sequence is IIYVNMSSVALCFILMFGNSM. At 408–437 the chain is on the nuclear side; sequence YLSSYYSSCLLVTWAIMQKKSKIQKLGGTE. Residues 438–458 traverse the membrane as a helical segment; the sequence is LQFWLIQGCFWWCGTIILKFL. Over 459-507 the chain is Perinuclear space; the sequence is TSKICGVSDHIRLSDLIAARILRYTDFDTLIYTCAPEFDFMEQATPLRY. A helical membrane pass occupies residues 508–528; that stretch reads IKTLLLPLILVITYLIFKKIV. At 529–548 the chain is on the nuclear side; the sequence is RDIMCVLYTNTYVRKQLLDN. The chain crosses the membrane as a helical span at residues 549 to 569; sequence AELIFHTLQLLAFTGLAILIM. Residues 570–590 are Perinuclear space-facing; that stretch reads RLKLFLTPHMCIMASLICSQR. Residues 591–611 traverse the membrane as a helical segment; that stretch reads LFGWLFCRIHFENVVFGILTM. Topologically, residues 612 to 773 are nuclear; it reads MSIQGCANLH…NSMYRVLKIN (162 aa).

The protein belongs to the dpy-19 family. As to quaternary structure, interacts with FAM209. As to expression, predominantly expressed in testis. Present in testis but absent from epididymal sperm (at protein level).

The protein localises to the nucleus inner membrane. Functionally, probable C-mannosyltransferase that mediates C-mannosylation of tryptophan residues on target proteins. In terms of biological role, required during spermatogenesis for sperm head elongation and acrosome formation. Also plays a role in acrosome attachment to the nuclear envelope. This Mus musculus (Mouse) protein is Probable C-mannosyltransferase DPY19L2 (Dpy19l2).